The chain runs to 282 residues: Pyridoxal 5'-phosphate synthase subunit PdxS (282 aa).

Asp-14 lines the D-ribose 5-phosphate pocket. Lys-71 functions as the Schiff-base intermediate with D-ribose 5-phosphate in the catalytic mechanism. Gly-143 serves as a coordination point for D-ribose 5-phosphate. A D-glyceraldehyde 3-phosphate-binding site is contributed by Arg-155. D-ribose 5-phosphate-binding positions include Gly-204 and 225–226; that span reads GS.

The protein belongs to the PdxS/SNZ family. In terms of assembly, in the presence of PdxT, forms a dodecamer of heterodimers.

The catalysed reaction is aldehydo-D-ribose 5-phosphate + D-glyceraldehyde 3-phosphate + L-glutamine = pyridoxal 5'-phosphate + L-glutamate + phosphate + 3 H2O + H(+). It participates in cofactor biosynthesis; pyridoxal 5'-phosphate biosynthesis. Functionally, catalyzes the formation of pyridoxal 5'-phosphate from ribose 5-phosphate (RBP), glyceraldehyde 3-phosphate (G3P) and ammonia. The ammonia is provided by the PdxT subunit. Can also use ribulose 5-phosphate and dihydroxyacetone phosphate as substrates, resulting from enzyme-catalyzed isomerization of RBP and G3P, respectively. The polypeptide is Pyridoxal 5'-phosphate synthase subunit PdxS (Treponema denticola (strain ATCC 35405 / DSM 14222 / CIP 103919 / JCM 8153 / KCTC 15104)).